Here is a 426-residue protein sequence, read N- to C-terminus: Glutamate-1-semialdehyde 2,1-aminomutase (426 aa).

Lys265 is subject to N6-(pyridoxal phosphate)lysine.

It belongs to the class-III pyridoxal-phosphate-dependent aminotransferase family. HemL subfamily. The cofactor is pyridoxal 5'-phosphate.

It localises to the cytoplasm. The catalysed reaction is (S)-4-amino-5-oxopentanoate = 5-aminolevulinate. It participates in porphyrin-containing compound metabolism; protoporphyrin-IX biosynthesis; 5-aminolevulinate from L-glutamyl-tRNA(Glu): step 2/2. The protein is Glutamate-1-semialdehyde 2,1-aminomutase of Hyperthermus butylicus (strain DSM 5456 / JCM 9403 / PLM1-5).